The chain runs to 95 residues: Small ribosomal subunit protein bS6 (95 aa).

Belongs to the bacterial ribosomal protein bS6 family.

Binds together with bS18 to 16S ribosomal RNA. The polypeptide is Small ribosomal subunit protein bS6 (Aster yellows witches'-broom phytoplasma (strain AYWB)).